The following is a 180-amino-acid chain: Adenine phosphoribosyltransferase (180 aa).

Position 2 is an N-acetylalanine (alanine 2). 3 positions are modified to phosphoserine: serine 4, serine 15, and serine 30. Tyrosine 60 carries the phosphotyrosine modification. A Phosphoserine modification is found at serine 66. Lysine 114 is subject to N6-acetyllysine. Position 135 is a phosphothreonine (threonine 135).

The protein belongs to the purine/pyrimidine phosphoribosyltransferase family. As to quaternary structure, homodimer.

The protein resides in the cytoplasm. It catalyses the reaction AMP + diphosphate = 5-phospho-alpha-D-ribose 1-diphosphate + adenine. It participates in purine metabolism; AMP biosynthesis via salvage pathway; AMP from adenine: step 1/1. Its function is as follows. Catalyzes a salvage reaction resulting in the formation of AMP, that is energically less costly than de novo synthesis. This Homo sapiens (Human) protein is Adenine phosphoribosyltransferase.